Reading from the N-terminus, the 304-residue chain is Acetylglutamate kinase (304 aa).

Residues 77–78 (GG), Arg99, and Asn201 each bind substrate.

Belongs to the acetylglutamate kinase family. ArgB subfamily.

The protein resides in the cytoplasm. It carries out the reaction N-acetyl-L-glutamate + ATP = N-acetyl-L-glutamyl 5-phosphate + ADP. It functions in the pathway amino-acid biosynthesis; L-arginine biosynthesis; N(2)-acetyl-L-ornithine from L-glutamate: step 2/4. Its function is as follows. Catalyzes the ATP-dependent phosphorylation of N-acetyl-L-glutamate. In Methylibium petroleiphilum (strain ATCC BAA-1232 / LMG 22953 / PM1), this protein is Acetylglutamate kinase.